Consider the following 263-residue polypeptide: MADSDEWDADNFEPNEPIKIATAGRLDRWEGEDEEEDVKDNWDDEEEEKEEEKKVEQKIAEVKPPEKKKLSDKIKEKELLQKKKQEELKKNQETAASESLTLEEQLAEKARLKKLQEEADMELAREAFGVDPAAANASTTVNTTNASGIEAMCPSSKDDFVTFEKLLKEKITQFEKSVHYPSFLESLFRELCISLEVDDLKKISTSLSVLLTEKQKQEKEKKANKKKKKGVVPGGGLKANMKDDFADYGGFDGGYGNEYDDFM.

Acidic residues-rich tracts occupy residues 1–13 (MADS…DNFE) and 30–50 (EGED…EEKE). 2 disordered regions span residues 1-75 (MADS…DKIK) and 214-235 (KQKQ…VPGG). Residues 30–127 (EGEDEEEDVK…EADMELAREA (98 aa)) adopt a coiled-coil conformation. Residues 51 to 75 (EEKKVEQKIAEVKPPEKKKLSDKIK) are compositionally biased toward basic and acidic residues.

The protein belongs to the eIF-3 subunit J family. Component of the eukaryotic translation initiation factor 3 (eIF-3) complex, which is composed of 13 subunits: eif3a, eif3b, eif3c, eif3d, eif3e, eif3f, eif3g, eif3h, eif3i, eif3j, eif3k, eif3l and eif3m.

The protein localises to the cytoplasm. Its function is as follows. Component of the eukaryotic translation initiation factor 3 (eIF-3) complex, which is involved in protein synthesis of a specialized repertoire of mRNAs and, together with other initiation factors, stimulates binding of mRNA and methionyl-tRNAi to the 40S ribosome. The eIF-3 complex specifically targets and initiates translation of a subset of mRNAs involved in cell proliferation. The polypeptide is Eukaryotic translation initiation factor 3 subunit J-B (eif3jb) (Danio rerio (Zebrafish)).